The sequence spans 248 residues: 2,3-bisphosphoglycerate-dependent phosphoglycerate mutase (248 aa).

Residues 10–17 (RHGQSEWN), 23–24 (TG), Arg-62, 89–92 (ERHY), Lys-100, 116–117 (RR), and 183–184 (GN) each bind substrate. His-11 serves as the catalytic Tele-phosphohistidine intermediate. Glu-89 (proton donor/acceptor) is an active-site residue.

This sequence belongs to the phosphoglycerate mutase family. BPG-dependent PGAM subfamily.

It carries out the reaction (2R)-2-phosphoglycerate = (2R)-3-phosphoglycerate. The protein operates within carbohydrate degradation; glycolysis; pyruvate from D-glyceraldehyde 3-phosphate: step 3/5. Catalyzes the interconversion of 2-phosphoglycerate and 3-phosphoglycerate. In Corynebacterium glutamicum (strain ATCC 13032 / DSM 20300 / JCM 1318 / BCRC 11384 / CCUG 27702 / LMG 3730 / NBRC 12168 / NCIMB 10025 / NRRL B-2784 / 534), this protein is 2,3-bisphosphoglycerate-dependent phosphoglycerate mutase.